A 325-amino-acid chain; its full sequence is Anthranilate phosphoribosyltransferase (325 aa).

Residues G74, 77–78 (GD), T82, 84–87 (NVST), 101–109 (KHGNVSITS), and S113 each bind 5-phospho-alpha-D-ribose 1-diphosphate. Anthranilate is bound at residue G74. S86 is a binding site for Mg(2+). N104 is a binding site for anthranilate. Position 159 (R159) interacts with anthranilate. 2 residues coordinate Mg(2+): D217 and E218.

This sequence belongs to the anthranilate phosphoribosyltransferase family. As to quaternary structure, homodimer. It depends on Mg(2+) as a cofactor.

The enzyme catalyses N-(5-phospho-beta-D-ribosyl)anthranilate + diphosphate = 5-phospho-alpha-D-ribose 1-diphosphate + anthranilate. The protein operates within amino-acid biosynthesis; L-tryptophan biosynthesis; L-tryptophan from chorismate: step 2/5. In terms of biological role, catalyzes the transfer of the phosphoribosyl group of 5-phosphorylribose-1-pyrophosphate (PRPP) to anthranilate to yield N-(5'-phosphoribosyl)-anthranilate (PRA). The sequence is that of Anthranilate phosphoribosyltransferase from Thermococcus kodakarensis (strain ATCC BAA-918 / JCM 12380 / KOD1) (Pyrococcus kodakaraensis (strain KOD1)).